The sequence spans 250 residues: MAVTKLVLVRHGESQWNNENRFTGWYDVDLSEKGRTEAKAAGKLLKDEGFTFDFAYTSVLKRAIHTLWSILDELDQAWLPTEKTWKLNERHYGALQGLDKSETAAKYGDEQVKLWRRGFAITPPALDKSDERFPGHDPRYAKLTDAELPTTESLALTIDRVIPYWEEVIKPRIASGERVIIAAHGNSLRALVKYLDNLNEEEILELNIPTGVPLVYEFDENFKPIKHYYLGNADEIAAKAAAVANQGKAK.

Substrate contacts are provided by residues 10-17 (RHGESQWN), 23-24 (TG), Arg62, 89-92 (ERHY), Lys100, 116-117 (RR), and 185-186 (GN). The Tele-phosphohistidine intermediate role is filled by His11. Glu89 serves as the catalytic Proton donor/acceptor.

It belongs to the phosphoglycerate mutase family. BPG-dependent PGAM subfamily. In terms of assembly, homodimer.

It carries out the reaction (2R)-2-phosphoglycerate = (2R)-3-phosphoglycerate. The protein operates within carbohydrate degradation; glycolysis; pyruvate from D-glyceraldehyde 3-phosphate: step 3/5. In terms of biological role, catalyzes the interconversion of 2-phosphoglycerate and 3-phosphoglycerate. The chain is 2,3-bisphosphoglycerate-dependent phosphoglycerate mutase from Yersinia enterocolitica serotype O:8 / biotype 1B (strain NCTC 13174 / 8081).